The following is a 164-amino-acid chain: Cyanate hydratase (164 aa).

Catalysis depends on residues Arg90, Glu93, and Ser116.

This sequence belongs to the cyanase family.

The enzyme catalyses cyanate + hydrogencarbonate + 3 H(+) = NH4(+) + 2 CO2. Functionally, catalyzes the reaction of cyanate with bicarbonate to produce ammonia and carbon dioxide. The protein is Cyanate hydratase of Vitis vinifera (Grape).